The chain runs to 394 residues: Elongation factor Tu-A (394 aa).

One can recognise a tr-type G domain in the interval 10–204 (KPHVNVGTIG…ALDTYIPEPE (195 aa)). The segment at 19–26 (GHVDHGKT) is G1. Residue 19–26 (GHVDHGKT) coordinates GTP. Residue Thr26 coordinates Mg(2+). The interval 60-64 (GITIN) is G2. Residues 81–84 (DCPG) form a G3 region. GTP-binding positions include 81-85 (DCPGH) and 136-139 (NKCD). The G4 stretch occupies residues 136 to 139 (NKCD). A G5 region spans residues 174–176 (SAL).

The protein belongs to the TRAFAC class translation factor GTPase superfamily. Classic translation factor GTPase family. EF-Tu/EF-1A subfamily. As to quaternary structure, monomer.

The protein resides in the cytoplasm. The enzyme catalyses GTP + H2O = GDP + phosphate + H(+). GTP hydrolase that promotes the GTP-dependent binding of aminoacyl-tRNA to the A-site of ribosomes during protein biosynthesis. The polypeptide is Elongation factor Tu-A (Vibrio cholerae serotype O1 (strain ATCC 39315 / El Tor Inaba N16961)).